We begin with the raw amino-acid sequence, 63 residues long: Large ribosomal subunit protein uL29 (63 aa).

The protein belongs to the universal ribosomal protein uL29 family.

The polypeptide is Large ribosomal subunit protein uL29 (Caulobacter vibrioides (strain ATCC 19089 / CIP 103742 / CB 15) (Caulobacter crescentus)).